The following is a 223-amino-acid chain: Ion-translocating oxidoreductase complex subunit E (223 aa).

The next 6 helical transmembrane spans lie at 17 to 37 (NGVL…GTAT), 40 to 60 (LGMG…VAMF), 70 to 90 (IPVY…GMNA), 94 to 114 (ELYK…LPLA), 129 to 149 (FLDG…IGAV), and 182 to 202 (WGIL…LMVV).

This sequence belongs to the NqrDE/RnfAE family. The complex is composed of six subunits: RnfA, RnfB, RnfC, RnfD, RnfE and RnfG.

It is found in the cell inner membrane. Its function is as follows. Part of a membrane-bound complex that couples electron transfer with translocation of ions across the membrane. This Paramagnetospirillum magneticum (strain ATCC 700264 / AMB-1) (Magnetospirillum magneticum) protein is Ion-translocating oxidoreductase complex subunit E.